A 91-amino-acid chain; its full sequence is MARSIKKGPFVDAHLMKKVLSANSANDKKPIKTWSRRSTVLPEMIGITFNVHNGRNFVPVLITENHVGYKLGEFAPTRTFKGHKGSVQRKA.

This sequence belongs to the universal ribosomal protein uS19 family.

Protein S19 forms a complex with S13 that binds strongly to the 16S ribosomal RNA. This Aliarcobacter butzleri (strain RM4018) (Arcobacter butzleri) protein is Small ribosomal subunit protein uS19.